We begin with the raw amino-acid sequence, 114 residues long: DNA-binding protein Mbur_0117 (114 aa).

The interval 14–37 is disordered; it reads ELQQQQSSPQNDAQAAYQQEQAQA. Positions 16–35 are enriched in low complexity; sequence QQQQSSPQNDAQAAYQQEQA.

This sequence belongs to the PDCD5 family.

In Methanococcoides burtonii (strain DSM 6242 / NBRC 107633 / OCM 468 / ACE-M), this protein is DNA-binding protein Mbur_0117.